The chain runs to 483 residues: Transmembrane protein 39B (483 aa).

Asparagine 9 is a glycosylation site (N-linked (GlcNAc...) asparagine). Transmembrane regions (helical) follow at residues histidine 76–isoleucine 96, threonine 114–alanine 134, leucine 158–phenylalanine 182, phenylalanine 187–glycine 207, glutamate 281–valine 301, valine 414–leucine 434, and histidine 440–leucine 460.

Belongs to the TMEM39 family.

The protein resides in the endoplasmic reticulum membrane. Functionally, may protect the cells against DNA damage caused by exposure to the cold-warming stress and facilitates tissue damage repair during the recovery phase. The sequence is that of Transmembrane protein 39B from Xenopus tropicalis (Western clawed frog).